A 301-amino-acid polypeptide reads, in one-letter code: Lipoyl synthase (301 aa).

The [4Fe-4S] cluster site is built by Cys53, Cys58, Cys64, Cys79, Cys83, Cys86, and Ser290. A Radical SAM core domain is found at Trp65 to Lys279.

It belongs to the radical SAM superfamily. Lipoyl synthase family. [4Fe-4S] cluster serves as cofactor.

It is found in the cytoplasm. The enzyme catalyses [[Fe-S] cluster scaffold protein carrying a second [4Fe-4S](2+) cluster] + N(6)-octanoyl-L-lysyl-[protein] + 2 oxidized [2Fe-2S]-[ferredoxin] + 2 S-adenosyl-L-methionine + 4 H(+) = [[Fe-S] cluster scaffold protein] + N(6)-[(R)-dihydrolipoyl]-L-lysyl-[protein] + 4 Fe(3+) + 2 hydrogen sulfide + 2 5'-deoxyadenosine + 2 L-methionine + 2 reduced [2Fe-2S]-[ferredoxin]. It functions in the pathway protein modification; protein lipoylation via endogenous pathway; protein N(6)-(lipoyl)lysine from octanoyl-[acyl-carrier-protein]: step 2/2. Catalyzes the radical-mediated insertion of two sulfur atoms into the C-6 and C-8 positions of the octanoyl moiety bound to the lipoyl domains of lipoate-dependent enzymes, thereby converting the octanoylated domains into lipoylated derivatives. This chain is Lipoyl synthase, found in Leptospira interrogans serogroup Icterohaemorrhagiae serovar copenhageni (strain Fiocruz L1-130).